A 432-amino-acid chain; its full sequence is Tol-Pal system protein TolB (432 aa).

A signal peptide spans 1-24; it reads MKLVTRMWSILIVFFLAVLQPAQA.

The protein belongs to the TolB family. The Tol-Pal system is composed of five core proteins: the inner membrane proteins TolA, TolQ and TolR, the periplasmic protein TolB and the outer membrane protein Pal. They form a network linking the inner and outer membranes and the peptidoglycan layer.

It is found in the periplasm. Functionally, part of the Tol-Pal system, which plays a role in outer membrane invagination during cell division and is important for maintaining outer membrane integrity. The chain is Tol-Pal system protein TolB from Pasteurella multocida (strain Pm70).